A 322-amino-acid polypeptide reads, in one-letter code: Daunorubicin resistance ATP-binding protein DrrA2 (322 aa).

Residues 6–236 (VRAEAMEKRY…VGGDRIEVVV (231 aa)) enclose the ABC transporter domain. 38–45 (GPNGAGKT) contacts ATP.

It belongs to the ABC transporter superfamily. Drug exporter-1 (DrugE1) (TC 3.A.1.105) family. The complex is probably composed of two ATP-binding proteins (DrrA2) and two transmembrane proteins (DrrB2).

The protein localises to the cell membrane. The catalysed reaction is daunorubicin(in) + ATP + H2O = daunorubicin(out) + ADP + phosphate + H(+). Part of the ABC transporter complex DrrA2B2 involved in daunorubicin efflux. Responsible for energy coupling to the transport system. Confers self-resistance to daunorubicin, an antibiotic produced by S.coeruleorubidus. This is Daunorubicin resistance ATP-binding protein DrrA2 from Streptomyces coeruleorubidus.